Here is a 237-residue protein sequence, read N- to C-terminus: Ribosomal RNA small subunit methyltransferase G (237 aa).

S-adenosyl-L-methionine is bound by residues Gly78, Phe83, Ala129–Glu130, and Arg148.

Belongs to the methyltransferase superfamily. RNA methyltransferase RsmG family.

Its subcellular location is the cytoplasm. Specifically methylates the N7 position of a guanine in 16S rRNA. In Streptococcus pyogenes serotype M4 (strain MGAS10750), this protein is Ribosomal RNA small subunit methyltransferase G.